Here is a 120-residue protein sequence, read N- to C-terminus: MAQLAKFDVPEELTNKALEALELARDTGKIKKGTNEATKAIERGNAKLVLIAEDIEPAEIVAHIGPLSEEKKAPYIYIKNQKDLGAASGLGVSCATVAIVDAGKAAEMIQDIAQKLDALK.

This sequence belongs to the eukaryotic ribosomal protein eL8 family. In terms of assembly, part of the 50S ribosomal subunit. Probably part of the RNase P complex.

The protein localises to the cytoplasm. Its function is as follows. Multifunctional RNA-binding protein that recognizes the K-turn motif in ribosomal RNA, the RNA component of RNase P, box H/ACA, box C/D and box C'/D' sRNAs. The sequence is that of Large ribosomal subunit protein eL8 from Methanosarcina mazei (strain ATCC BAA-159 / DSM 3647 / Goe1 / Go1 / JCM 11833 / OCM 88) (Methanosarcina frisia).